We begin with the raw amino-acid sequence, 214 residues long: Refilin-B (214 aa).

Residues 1 to 56 (MVGRLSLQDVPELVDAKKKGDGVLDSPDSGLPPSPSPSHWGLAAGGGGGERAAAPG) form a disordered region. Ser-6 and Ser-26 each carry phosphoserine.

This sequence belongs to the Refilin family. As to quaternary structure, interacts with FLNA and FLNB.

The protein localises to the cytoplasm. The protein resides in the cytoskeleton. Functionally, involved in the regulation of the perinuclear actin network and nuclear shape through interaction with filamins. Plays an essential role in the formation of cartilaginous skeletal elements. The chain is Refilin-B from Homo sapiens (Human).